The chain runs to 202 residues: Orotate phosphoribosyltransferase (202 aa).

5-phospho-alpha-D-ribose 1-diphosphate-binding positions include lysine 93 and glutamate 113–serine 121. Positions 117 and 145 each coordinate orotate.

This sequence belongs to the purine/pyrimidine phosphoribosyltransferase family. PyrE subfamily. As to quaternary structure, homodimer. It depends on Mg(2+) as a cofactor.

The catalysed reaction is orotidine 5'-phosphate + diphosphate = orotate + 5-phospho-alpha-D-ribose 1-diphosphate. It functions in the pathway pyrimidine metabolism; UMP biosynthesis via de novo pathway; UMP from orotate: step 1/2. In terms of biological role, catalyzes the transfer of a ribosyl phosphate group from 5-phosphoribose 1-diphosphate to orotate, leading to the formation of orotidine monophosphate (OMP). The polypeptide is Orotate phosphoribosyltransferase (Campylobacter jejuni subsp. doylei (strain ATCC BAA-1458 / RM4099 / 269.97)).